Reading from the N-terminus, the 341-residue chain is Phenylalanine--tRNA ligase alpha subunit (341 aa).

E254 provides a ligand contact to Mg(2+).

It belongs to the class-II aminoacyl-tRNA synthetase family. Phe-tRNA synthetase alpha subunit type 1 subfamily. As to quaternary structure, tetramer of two alpha and two beta subunits. Requires Mg(2+) as cofactor.

The protein resides in the cytoplasm. It catalyses the reaction tRNA(Phe) + L-phenylalanine + ATP = L-phenylalanyl-tRNA(Phe) + AMP + diphosphate + H(+). The protein is Phenylalanine--tRNA ligase alpha subunit (pheS) of Mycoplasma genitalium (strain ATCC 33530 / DSM 19775 / NCTC 10195 / G37) (Mycoplasmoides genitalium).